The chain runs to 631 residues: MIKFTNENLIRGIRMTISAKSRHLALGTDMTRKFSLSCRFLNKANLTEEEKELLNEPRARDYVDVCIVGGGPAGLATAIKLKQLDNSSGTGQLRVVVLEKSSVLGGQTVSGAILEPGVWKELFPDEKSDIGIPLPKELATLVTKEHLKFLKGKWAISVPEPSQMINKGRNYIVSLNQVVGYLGEKAEEVGVEVYPGIAVSDLIYDENNAVKGVITKDAGISKSGKPKETFERGMEFWARQTVLAEGCHGSLTKQALAKYDLRKGRQHQTYGLGIKEVWEVKPENFNKGFAAHTMGYPLTNDVYGGGFQYHFGDGLVTVGLVVGLDYKNPYVSPYKEFQKMKHHPYYSKVLEGGKCIAYAARALNEGGLQSVPKLNFPGGVLVGASAGFMNVPKIKGTHTAMKSGLLAAESIFESIKGLPVLEEVEDEDAKMAMFDKEATINLESYESAFKESSIYKELYEVRNIRPSFSGKLGGYGGMIYSGIDSLILKGKVPWTLKFDEKNDGEILEPASKYKPIEYPKPDGVISFDILTSVSRTGTYHDDDEPCHLRVPGQDMVKYAERSFPVWKGVESRFCPAGVYEFVKDEKSPVGTRLQINSQNCIHCKTCDIKAPRQDITWKVPEGGDGPKYTLT.

65-79 (VCIVGGGPAGLATAI) serves as a coordination point for FAD. The [4Fe-4S] cluster site is built by Cys574, Cys600, Cys603, and Cys606. The 4Fe-4S ferredoxin-type domain occupies 591–620 (TRLQINSQNCIHCKTCDIKAPRQDITWKVP).

It belongs to the ETF-QO/FixC family. The cofactor is [4Fe-4S] cluster. FAD is required as a cofactor.

Its subcellular location is the mitochondrion inner membrane. The enzyme catalyses a ubiquinone + reduced [electron-transfer flavoprotein] = a ubiquinol + oxidized [electron-transfer flavoprotein] + H(+). In terms of biological role, accepts electrons from ETF and reduces ubiquinone. The chain is Probable electron transfer flavoprotein-ubiquinone oxidoreductase, mitochondrial (CIR2) from Saccharomyces cerevisiae (strain ATCC 204508 / S288c) (Baker's yeast).